The sequence spans 550 residues: MSPTISHKDNSRQRRSGMFGHALDMKSGPLPPGGWDDNHQDSVGGEGDREVLLGDVGPGDFPKAKRSYRAELSSILLLLFLYVLQGIPLGLAGSIPLILQSKNVSYTDQAFFSFVFWPFSLKLLWAPLVDAVYFKNFGRRKSWLVPTQYILGIFMIYLSTQVDRLLGNIDGRTPDVVALTVTFFLFEFLAATQDIAVDGWALTMLSRENVGYASTCNSVGQTAGYFLGNVLFLALESADFCNKYLRFQPQPRGIVTLSDFLFFWGTVFLITTTLVALLKKETREASVVKEETQGITDTYKLLFSIIKMPAVLAFCLLILTSKIGFSAADAVTGLKLVEEGVPKEHLALLAVPMVPLQIILPLLISKYTAGPQPLNIFYKAMPYRLLLGLEYALLVWWTPKVEHQGGFPIYYYIIVLLSYALHQVTLYSMYVSIMAFNAKVSDPLIGGTYMTLLNTVSNLGGNWPSTVALWLVDPLTVKECVGASNQNCRTPEAIELCKKLGGSCVTALDGYYVESIVCVLIGFGWWFFLGPKFKKLQDEGPSSWKCKRTN.

The Cytoplasmic portion of the chain corresponds to 1-74; it reads MSPTISHKDN…KRSYRAELSS (74 aa). At S42 the chain carries Phosphoserine. A helical transmembrane segment spans residues 75-95; that stretch reads ILLLLFLYVLQGIPLGLAGSI. The Extracellular segment spans residues 96–113; the sequence is PLILQSKNVSYTDQAFFS. N103 is a glycosylation site (N-linked (GlcNAc...) asparagine). A helical transmembrane segment spans residues 114 to 134; the sequence is FVFWPFSLKLLWAPLVDAVYF. At 135–141 the chain is on the cytoplasmic side; it reads KNFGRRK. A helical transmembrane segment spans residues 142 to 162; sequence SWLVPTQYILGIFMIYLSTQV. The Extracellular segment spans residues 163-256; the sequence is DRLLGNIDGR…FQPQPRGIVT (94 aa). The chain crosses the membrane as a helical span at residues 257 to 277; it reads LSDFLFFWGTVFLITTTLVAL. Residues 278–300 are Cytoplasmic-facing; that stretch reads LKKETREASVVKEETQGITDTYK. Residues 301 to 321 traverse the membrane as a helical segment; it reads LLFSIIKMPAVLAFCLLILTS. Residues 322-344 are Extracellular-facing; sequence KIGFSAADAVTGLKLVEEGVPKE. The helical transmembrane segment at 345–365 threads the bilayer; it reads HLALLAVPMVPLQIILPLLIS. The Cytoplasmic portion of the chain corresponds to 366–375; sequence KYTAGPQPLN. The chain crosses the membrane as a helical span at residues 376–396; it reads IFYKAMPYRLLLGLEYALLVW. Over 397-405 the chain is Extracellular; the sequence is WTPKVEHQG. Residues 406–426 form a helical membrane-spanning segment; that stretch reads GFPIYYYIIVLLSYALHQVTL. Residues 427–509 lie on the Cytoplasmic side of the membrane; it reads YSMYVSIMAF…LGGSCVTALD (83 aa). The helical transmembrane segment at 510–530 threads the bilayer; it reads GYYVESIVCVLIGFGWWFFLG. The Extracellular portion of the chain corresponds to 531–550; sequence PKFKKLQDEGPSSWKCKRTN.

It belongs to the SLC33A transporter family. As to quaternary structure, homodimerizes. Expressed in brain at all developmental stages. Detected in hippocampus, hypothalamus, cerebellum, cortex, olfactory bulb, and the ventral and dorsal anterior olfactory nucleus.

It localises to the endoplasmic reticulum membrane. It carries out the reaction acetyl-CoA(in) = acetyl-CoA(out). In terms of biological role, acetyl-CoA transporter that mediates active acetyl-CoA import through the endoplasmic reticulum (ER) membrane into the ER lumen where specific ER-based acetyl-CoA:lysine acetyltransferases are responsible for the acetylation of ER-based protein substrates, such as BACE1. Necessary for O-acetylation of gangliosides. The chain is Acetyl-coenzyme A transporter 1 (Slc33a1) from Rattus norvegicus (Rat).